The sequence spans 129 residues: Small ribosomal subunit protein uS11 (129 aa).

It belongs to the universal ribosomal protein uS11 family. As to quaternary structure, part of the 30S ribosomal subunit. Interacts with proteins S7 and S18. Binds to IF-3.

In terms of biological role, located on the platform of the 30S subunit, it bridges several disparate RNA helices of the 16S rRNA. Forms part of the Shine-Dalgarno cleft in the 70S ribosome. The polypeptide is Small ribosomal subunit protein uS11 (Haemophilus ducreyi (strain 35000HP / ATCC 700724)).